The sequence spans 101 residues: Large ribosomal subunit protein eL21 (101 aa).

A compositionally biased stretch (basic residues) spans 1–18; sequence MVKHSRGYRTRSRSLLRK. Residues 1–23 are disordered; the sequence is MVKHSRGYRTRSRSLLRKSPRER.

Belongs to the eukaryotic ribosomal protein eL21 family.

This is Large ribosomal subunit protein eL21 from Saccharolobus islandicus (strain Y.N.15.51 / Yellowstone #2) (Sulfolobus islandicus).